A 60-amino-acid chain; its full sequence is Large ribosomal subunit protein bL32 (60 aa).

Basic residues predominate over residues 1-16 (MPNPKRRHSKKRTSTR). The tract at residues 1-28 (MPNPKRRHSKKRTSTRRAHDALKQPGLS) is disordered.

The protein belongs to the bacterial ribosomal protein bL32 family.

In Solibacter usitatus (strain Ellin6076), this protein is Large ribosomal subunit protein bL32.